The chain runs to 238 residues: LexA repressor (238 aa).

Positions 26 to 46 form a DNA-binding region, H-T-H motif; sequence FDEMKDALELRSKSGIHRLIS. Active-site for autocatalytic cleavage activity residues include Ser159 and Lys197.

Belongs to the peptidase S24 family. Homodimer.

The enzyme catalyses Hydrolysis of Ala-|-Gly bond in repressor LexA.. Represses a number of genes involved in the response to DNA damage (SOS response), including recA and lexA. In the presence of single-stranded DNA, RecA interacts with LexA causing an autocatalytic cleavage which disrupts the DNA-binding part of LexA, leading to derepression of the SOS regulon and eventually DNA repair. This Gluconobacter oxydans (strain 621H) (Gluconobacter suboxydans) protein is LexA repressor.